Here is a 275-residue protein sequence, read N- to C-terminus: Light-independent protochlorophyllide reductase iron-sulfur ATP-binding protein (275 aa).

ATP is bound by residues 12–17 (GIGKST) and Lys-41. Ser-16 lines the Mg(2+) pocket. [4Fe-4S] cluster-binding residues include Cys-97 and Cys-131. 182-183 (NR) serves as a coordination point for ATP.

Belongs to the NifH/BchL/ChlL family. In terms of assembly, homodimer. Protochlorophyllide reductase is composed of three subunits; BchL, BchN and BchB. [4Fe-4S] cluster is required as a cofactor.

The enzyme catalyses chlorophyllide a + oxidized 2[4Fe-4S]-[ferredoxin] + 2 ADP + 2 phosphate = protochlorophyllide a + reduced 2[4Fe-4S]-[ferredoxin] + 2 ATP + 2 H2O. Its pathway is porphyrin-containing compound metabolism; bacteriochlorophyll biosynthesis (light-independent). Component of the dark-operative protochlorophyllide reductase (DPOR) that uses Mg-ATP and reduced ferredoxin to reduce ring D of protochlorophyllide (Pchlide) to form chlorophyllide a (Chlide). This reaction is light-independent. The L component serves as a unique electron donor to the NB-component of the complex, and binds Mg-ATP. This Chlorobium phaeovibrioides (strain DSM 265 / 1930) (Prosthecochloris vibrioformis (strain DSM 265)) protein is Light-independent protochlorophyllide reductase iron-sulfur ATP-binding protein.